We begin with the raw amino-acid sequence, 251 residues long: Cell division protein ZapD (251 aa).

The protein belongs to the ZapD family. As to quaternary structure, interacts with FtsZ.

The protein resides in the cytoplasm. In terms of biological role, cell division factor that enhances FtsZ-ring assembly. Directly interacts with FtsZ and promotes bundling of FtsZ protofilaments, with a reduction in FtsZ GTPase activity. This Azoarcus sp. (strain BH72) protein is Cell division protein ZapD.